The primary structure comprises 172 residues: Large ribosomal subunit protein uL10 (172 aa).

This sequence belongs to the universal ribosomal protein uL10 family. In terms of assembly, part of the ribosomal stalk of the 50S ribosomal subunit. The N-terminus interacts with L11 and the large rRNA to form the base of the stalk. The C-terminus forms an elongated spine to which L12 dimers bind in a sequential fashion forming a multimeric L10(L12)X complex.

Its function is as follows. Forms part of the ribosomal stalk, playing a central role in the interaction of the ribosome with GTP-bound translation factors. The sequence is that of Large ribosomal subunit protein uL10 from Chlorobium limicola (strain DSM 245 / NBRC 103803 / 6330).